Here is a 223-residue protein sequence, read N- to C-terminus: Neurotrophic factor BDNF precursor form (223 aa).

A signal peptide spans 1–5; that stretch reads SCMKA. The propeptide occupies 6–114; it reads APMKEVSIRG…AANMSMRVRR (109 aa). Asn-107 carries an N-linked (GlcNAc...) asparagine glycan. 2 disulfide bridges follow: Cys-127–Cys-194 and Cys-172–Cys-223.

This sequence belongs to the NGF-beta family.

Its subcellular location is the secreted. Its function is as follows. Promotes the survival of neuronal populations that are all located either in the central nervous system or directly connected to it. The protein is Neurotrophic factor BDNF precursor form (BDNF) of Boa constrictor (Boa).